A 407-amino-acid chain; its full sequence is MKIYLVGGAVRDSLLNIDVKDKDWVVVGSTPQKMDSLGYQTVGQDFPVFLNPKTKEEYALARTERKSGQGYKGFTCYAEPDVTLEEDLLRRDLTINAIAQADNGELIDPYNGQQDIIDRTLRHVSDAFTEDPLRVLRVARFAARFHHLGFTVAPETMHLMKVLVDSGELSHLTAERVWQEWQKSLSSQHPEIFLSTLKECGALAIVLPELNALFGIPQPEKWHPEIDTGIHTLMVAQQAALLSQDLPTRFAAQVHDLGKGVTPESEWPSHKLHCHTGIKLIKRLCDRVRVPNDYRDLALLVCEHHSNIHRAAELRAQTFIKIFDKMDVWRKPERLAPILLCCQADHAGRLGLETQPYPQKKRFEAAFDAAKNVEVKDVVAAGFKGPEIREELSKRRIEAVKDKLNIK.

Residues G8 and R11 each coordinate ATP. CTP is bound by residues G8 and R11. Residues D21 and D23 each contribute to the Mg(2+) site. Residues R91, R137, and R140 each coordinate ATP. 3 residues coordinate CTP: R91, R137, and R140. An HD domain is found at 228–329 (TGIHTLMVAQ…IKIFDKMDVW (102 aa)).

The protein belongs to the tRNA nucleotidyltransferase/poly(A) polymerase family. Bacterial CCA-adding enzyme type 1 subfamily. Monomer. Can also form homodimers and oligomers. Requires Mg(2+) as cofactor. Ni(2+) is required as a cofactor.

The catalysed reaction is a tRNA precursor + 2 CTP + ATP = a tRNA with a 3' CCA end + 3 diphosphate. It catalyses the reaction a tRNA with a 3' CCA end + 2 CTP + ATP = a tRNA with a 3' CCACCA end + 3 diphosphate. Functionally, catalyzes the addition and repair of the essential 3'-terminal CCA sequence in tRNAs without using a nucleic acid template. Adds these three nucleotides in the order of C, C, and A to the tRNA nucleotide-73, using CTP and ATP as substrates and producing inorganic pyrophosphate. tRNA 3'-terminal CCA addition is required both for tRNA processing and repair. Also involved in tRNA surveillance by mediating tandem CCA addition to generate a CCACCA at the 3' terminus of unstable tRNAs. While stable tRNAs receive only 3'-terminal CCA, unstable tRNAs are marked with CCACCA and rapidly degraded. The protein is Multifunctional CCA protein of Aliivibrio fischeri (strain ATCC 700601 / ES114) (Vibrio fischeri).